The chain runs to 261 residues: Cytochrome c oxidase subunit 3 (261 aa).

Residues 1–15 (MTHQTHAYHMVNPSP) are Mitochondrial matrix-facing. A helical membrane pass occupies residues 16–34 (WPLTGALSALLMTSGLIMW). The Mitochondrial intermembrane segment spans residues 35–40 (FHFNSM). A helical transmembrane segment spans residues 41 to 66 (YLLMLGLTTNTLTMYQWWRDIVREST). Residues 67–72 (FQGHHT) lie on the Mitochondrial matrix side of the membrane. A helical transmembrane segment spans residues 73-105 (PIVQKGLRYGMILFIVSEVFFFAGFFWAFYHSS). Topologically, residues 106–128 (LAPTPELGGCWPPTGITPLNPME) are mitochondrial intermembrane. Residues 129 to 152 (VPLLNTSVLLASGVSITWAHHSLM) traverse the membrane as a helical segment. Residues 153–155 (EGN) lie on the Mitochondrial matrix side of the membrane. A helical membrane pass occupies residues 156 to 183 (RKHMLQALFITISLGIYFTLLQASEYYE). Residues 184-190 (TPFTISD) are Mitochondrial intermembrane-facing. Residues 191 to 223 (GIYGSTFFMATGFHGLHVIIGSTFLIVCFVRQL) traverse the membrane as a helical segment. The Mitochondrial matrix segment spans residues 224 to 232 (KFHFTSNHH). Residues 233 to 256 (FGFEAAAWYWHFVDVVWLFLYVSI) form a helical membrane-spanning segment. Over 257–261 (YWWGS) the chain is Mitochondrial intermembrane.

Belongs to the cytochrome c oxidase subunit 3 family. As to quaternary structure, component of the cytochrome c oxidase (complex IV, CIV), a multisubunit enzyme composed of 14 subunits. The complex is composed of a catalytic core of 3 subunits MT-CO1, MT-CO2 and MT-CO3, encoded in the mitochondrial DNA, and 11 supernumerary subunits COX4I, COX5A, COX5B, COX6A, COX6B, COX6C, COX7A, COX7B, COX7C, COX8 and NDUFA4, which are encoded in the nuclear genome. The complex exists as a monomer or a dimer and forms supercomplexes (SCs) in the inner mitochondrial membrane with NADH-ubiquinone oxidoreductase (complex I, CI) and ubiquinol-cytochrome c oxidoreductase (cytochrome b-c1 complex, complex III, CIII), resulting in different assemblies (supercomplex SCI(1)III(2)IV(1) and megacomplex MCI(2)III(2)IV(2)).

It is found in the mitochondrion inner membrane. It catalyses the reaction 4 Fe(II)-[cytochrome c] + O2 + 8 H(+)(in) = 4 Fe(III)-[cytochrome c] + 2 H2O + 4 H(+)(out). Functionally, component of the cytochrome c oxidase, the last enzyme in the mitochondrial electron transport chain which drives oxidative phosphorylation. The respiratory chain contains 3 multisubunit complexes succinate dehydrogenase (complex II, CII), ubiquinol-cytochrome c oxidoreductase (cytochrome b-c1 complex, complex III, CIII) and cytochrome c oxidase (complex IV, CIV), that cooperate to transfer electrons derived from NADH and succinate to molecular oxygen, creating an electrochemical gradient over the inner membrane that drives transmembrane transport and the ATP synthase. Cytochrome c oxidase is the component of the respiratory chain that catalyzes the reduction of oxygen to water. Electrons originating from reduced cytochrome c in the intermembrane space (IMS) are transferred via the dinuclear copper A center (CU(A)) of subunit 2 and heme A of subunit 1 to the active site in subunit 1, a binuclear center (BNC) formed by heme A3 and copper B (CU(B)). The BNC reduces molecular oxygen to 2 water molecules using 4 electrons from cytochrome c in the IMS and 4 protons from the mitochondrial matrix. The polypeptide is Cytochrome c oxidase subunit 3 (MT-CO3) (Phoca vitulina (Harbor seal)).